The primary structure comprises 188 residues: GMP synthase [glutamine-hydrolyzing] subunit A (188 aa).

The region spanning K2–K188 is the Glutamine amidotransferase type-1 domain. C79 functions as the Nucleophile in the catalytic mechanism. Residues H166 and E168 contribute to the active site.

Heterodimer composed of a glutamine amidotransferase subunit (A) and a GMP-binding subunit (B).

It catalyses the reaction XMP + L-glutamine + ATP + H2O = GMP + L-glutamate + AMP + diphosphate + 2 H(+). It participates in purine metabolism; GMP biosynthesis; GMP from XMP (L-Gln route): step 1/1. Functionally, catalyzes the synthesis of GMP from XMP. This Sulfurisphaera tokodaii (strain DSM 16993 / JCM 10545 / NBRC 100140 / 7) (Sulfolobus tokodaii) protein is GMP synthase [glutamine-hydrolyzing] subunit A.